Here is a 357-residue protein sequence, read N- to C-terminus: MDQLLASVHAAGHSFLGDYWLLVWTLVKIVAVVLPLMGCVAYLTLWERKVIGWMHVRHGPNRTGPAGLLQPIADALKLLLKEIVVPAKSSKALFVIAPIMTIMPALAAWAVIPFGPEAALANVNAGLLFVMAITSLEVYGVIVAGWASNSKYAFLGAMRASAQMISYEIAMGFVLVIVLMVSGSLNLSEIVMLQTSGRFADMGLTFLSWNWLPLLPMFVIYIISGTAELNRHPFDVVEGESEIVAGHMVEYSGMSFAMFFLAEYANMILISMMATLMFLGGWSSPIDAMPFTWIPGWIWLGIKTLFVVTLFIWFRASFPRYRYDQIMRLGWKVFIPLTLVYLLIVAIWMKTPWNIWH.

Transmembrane regions (helical) follow at residues 20–40 (WLLV…MGCV), 92–112 (ALFV…WAVI), 127–147 (LLFV…AGWA), 165–185 (ISYE…SGSL), 203–223 (GLTF…IYII), 259–279 (FFLA…LMFL), 294–314 (IPGW…FIWF), and 329–349 (LGWK…AIWM).

The protein belongs to the complex I subunit 1 family. NDH-1 is composed of 14 different subunits. Subunits NuoA, H, J, K, L, M, N constitute the membrane sector of the complex.

The protein localises to the cell inner membrane. The catalysed reaction is a quinone + NADH + 5 H(+)(in) = a quinol + NAD(+) + 4 H(+)(out). NDH-1 shuttles electrons from NADH, via FMN and iron-sulfur (Fe-S) centers, to quinones in the respiratory chain. The immediate electron acceptor for the enzyme in this species is believed to be ubiquinone. Couples the redox reaction to proton translocation (for every two electrons transferred, four hydrogen ions are translocated across the cytoplasmic membrane), and thus conserves the redox energy in a proton gradient. This subunit may bind ubiquinone. The protein is NADH-quinone oxidoreductase subunit H of Herminiimonas arsenicoxydans.